Reading from the N-terminus, the 422-residue chain is 5-hydroxytryptamine receptor 1A (422 aa).

Residues 1-23 are disordered; it reads MDVLSPGQGNNTTSPPAPFETGG. Residues 1 to 38 are Extracellular-facing; it reads MDVLSPGQGNNTTSPPAPFETGGNTTGISDVTVSYQVI. N-linked (GlcNAc...) asparagine glycans are attached at residues Asn10, Asn11, and Asn24. Residues 39 to 59 form a helical membrane-spanning segment; it reads TSLLLGTLIFCAVLGNACVVA. At 60 to 73 the chain is on the cytoplasmic side; it reads AIALERSLQNVANY. The chain crosses the membrane as a helical span at residues 74–98; sequence LIGSLAVTDLMVSVLVLPMAALYQV. The Extracellular portion of the chain corresponds to 99–107; the sequence is LNKWTLGQV. A helical membrane pass occupies residues 108–132; it reads TCDLFIALDVLCCTSSILHLCAIAL. A disulfide bond links Cys109 and Cys187. Asp116 and Cys120 together coordinate serotonin. The DRY motif; important for ligand-induced conformation changes motif lies at 133–135; the sequence is DRY. Topologically, residues 133–152 are cytoplasmic; the sequence is DRYWAITDPIDYVNKRTPRR. Residues 153–174 traverse the membrane as a helical segment; the sequence is AAALISLTWLIGFLISIPPMLG. Residues 175-193 are Extracellular-facing; it reads WRTPEDRSDPDACTISKDH. A helical transmembrane segment spans residues 194 to 216; it reads GYTIYSTFGAFYIPLLLMLVLYG. At 217–346 the chain is on the cytoplasmic side; that stretch reads RIFRAARFRI…LARERKTVKT (130 aa). The segment at 235-262 is disordered; the sequence is KTGADTRHGASPAPQPKKSVNGESGSRN. 1D-myo-inositol 4-phosphate contacts are provided by Thr314, Lys345, Thr346, and Gly352. A helical transmembrane segment spans residues 347–370; the sequence is LGIIMGTFILCWLPFFIVALVLPF. Residues 371–378 are Extracellular-facing; it reads CESSCHMP. The chain crosses the membrane as a helical span at residues 379–403; sequence TLLGAIINWLGYSNSLLNPVIYAYF. Positions 396–400 match the NPxxY motif; important for ligand-induced conformation changes and signaling motif; that stretch reads NPVIY. Residues Phe403, Asn404, and Lys405 each coordinate 1D-myo-inositol 4-phosphate. Residues 404 to 422 lie on the Cytoplasmic side of the membrane; it reads NKDFQNAFKKIIKCKFCRQ.

The protein belongs to the G-protein coupled receptor 1 family. 5-hydroxytryptamine receptor subfamily. HTR1A sub-subfamily. Heterodimer; heterodimerizes with GPER1. Interacts with YIF1B. Interacts with GPR39 and GALR1. As to expression, detected in lymph nodes, thymus and spleen. Detected in activated T-cells, but not in resting T-cells.

Its subcellular location is the cell membrane. The protein localises to the cell projection. It localises to the dendrite. With respect to regulation, G-protein coupled receptor activity is regulated by lipids: phosphatidylinositol 4-phosphate increases HTR1A-mediated activity. Binding to aripiprazol drug is regulated by cholesterol, which shapes the ligand-binding pocket, determining the specificity for aripiprazol. Activated by IHCH-7179 small molecule: IHCH-7179 acts both as an agonist activator for HTR1A and as an antagonist inhibitor for HTR2A. Activated by SEP-363856 small molecule: IHCH-7179 acts both as an agonist activator for HTR1A and TAAR1. In terms of biological role, G-protein coupled receptor for 5-hydroxytryptamine (serotonin). Also functions as a receptor for various drugs and psychoactive substances. Ligand binding causes a conformation change that triggers signaling via guanine nucleotide-binding proteins (G proteins) and modulates the activity of downstream effectors, such as adenylate cyclase. HTR1A is coupled to G(i)/G(o) G alpha proteins and mediates inhibitory neurotransmission: signaling inhibits adenylate cyclase activity and activates a phosphatidylinositol-calcium second messenger system that regulates the release of Ca(2+) ions from intracellular stores. Beta-arrestin family members regulate signaling by mediating both receptor desensitization and resensitization processes. Plays a role in the regulation of 5-hydroxytryptamine release and in the regulation of dopamine and 5-hydroxytryptamine metabolism. Plays a role in the regulation of dopamine and 5-hydroxytryptamine levels in the brain, and thereby affects neural activity, mood and behavior. Plays a role in the response to anxiogenic stimuli. This is 5-hydroxytryptamine receptor 1A from Homo sapiens (Human).